Consider the following 506-residue polypeptide: Zinc finger protein 157 (506 aa).

A KRAB domain is found at 27–98 (VSFEDVAVDF…EEESSGHGYS (72 aa)). C2H2-type zinc fingers lie at residues 162–184 (FECH…LRIH), 190–212 (YECG…QKTH), 218–240 (FECN…TRTH), 246–268 (YECT…QRTH), 274–296 (YECS…HRTH), 302–324 (YECG…QRIH), 330–352 (YECG…QRTH), 358–380 (YQCN…QRIH), 386–408 (YECN…QRMH), 414–436 (YECS…RRTH), 442–464 (YECS…QRIH), and 470–492 (FECQ…QRTH).

This sequence belongs to the krueppel C2H2-type zinc-finger protein family.

It localises to the nucleus. Its function is as follows. May be involved in transcriptional regulation. In Homo sapiens (Human), this protein is Zinc finger protein 157 (ZNF157).